The sequence spans 642 residues: Serotransferrin (642 aa).

2 consecutive Transferrin-like domains span residues 1–280 (GIKE…SLKK) and 290–621 (IKWC…SLRQ). Fe(3+) is bound by residues aspartate 25 and tyrosine 54. 3 disulfides stabilise this stretch: cysteine 77–cysteine 158, cysteine 121–cysteine 137, and cysteine 186–cysteine 200. Hydrogencarbonate-binding residues include threonine 79, lysine 83, alanine 85, and glycine 86. Tyrosine 152 contributes to the Fe(3+) binding site. Histidine 208 provides a ligand contact to Fe(3+). Intrachain disulfides connect cysteine 293-cysteine 329 and cysteine 303-cysteine 320. Fe(3+) is bound at residue aspartate 344. Cystine bridges form between cysteine 354–cysteine 633, cysteine 369–cysteine 594, cysteine 402–cysteine 480, cysteine 426–cysteine 622, cysteine 436–cysteine 450, cysteine 447–cysteine 463, and cysteine 520–cysteine 535. N-linked (GlcNAc...) asparagine glycosylation is present at asparagine 365. Tyrosine 379 contributes to the Fe(3+) binding site. The hydrogencarbonate site is built by threonine 404, arginine 408, alanine 410, and glycine 411. Residue tyrosine 474 coordinates Fe(3+). Histidine 543 contributes to the Fe(3+) binding site.

Belongs to the transferrin family. Monomer. In terms of tissue distribution, brain and liver; to a lesser extent in kidney and heart.

The protein resides in the secreted. Transferrins are iron binding transport proteins which can bind two Fe(3+) ions in association with the binding of an anion, usually bicarbonate. The protein is Serotransferrin (tf) of Gadus morhua (Atlantic cod).